A 313-amino-acid polypeptide reads, in one-letter code: Nodulation protein D 3 (313 aa).

Positions 6–63 (LDLNLLVALDALMTKRSVTAAARSINLSQPAMSSAIARLRSYFQDELFRMQGRELITT) constitute an HTH lysR-type domain. The segment at residues 23 to 42 (VTAAARSINLSQPAMSSAIA) is a DNA-binding region (H-T-H motif).

It belongs to the LysR transcriptional regulatory family.

Its function is as follows. NodD regulates the expression of the nodABCFE genes which encode other nodulation proteins. NodD is also a negative regulator of its own expression. Binds flavonoids as inducers. This Rhizobium meliloti (strain 1021) (Ensifer meliloti) protein is Nodulation protein D 3 (nodD3).